The sequence spans 171 residues: 3-hydroxydecanoyl-[acyl-carrier-protein] dehydratase (171 aa).

The active site involves His70.

This sequence belongs to the thioester dehydratase family. FabA subfamily. As to quaternary structure, homodimer.

It is found in the cytoplasm. The enzyme catalyses a (3R)-hydroxyacyl-[ACP] = a (2E)-enoyl-[ACP] + H2O. The catalysed reaction is (3R)-hydroxydecanoyl-[ACP] = (2E)-decenoyl-[ACP] + H2O. It catalyses the reaction (2E)-decenoyl-[ACP] = (3Z)-decenoyl-[ACP]. The protein operates within lipid metabolism; fatty acid biosynthesis. Functionally, necessary for the introduction of cis unsaturation into fatty acids. Catalyzes the dehydration of (3R)-3-hydroxydecanoyl-ACP to E-(2)-decenoyl-ACP and then its isomerization to Z-(3)-decenoyl-ACP. Can catalyze the dehydratase reaction for beta-hydroxyacyl-ACPs with saturated chain lengths up to 16:0, being most active on intermediate chain length. This Pseudomonas fluorescens (strain SBW25) protein is 3-hydroxydecanoyl-[acyl-carrier-protein] dehydratase.